Consider the following 100-residue polypeptide: UPF0213 protein YhbQ (100 aa).

The region spanning 2–77 is the GIY-YIG domain; it reads TPWFLYLIRT…KQLTKRQKER (76 aa).

Belongs to the UPF0213 family.

The polypeptide is UPF0213 protein YhbQ (Escherichia coli O1:K1 / APEC).